A 556-amino-acid polypeptide reads, in one-letter code: Formate--tetrahydrofolate ligase (556 aa).

65-72 (TPAGEGKS) contacts ATP.

Belongs to the formate--tetrahydrofolate ligase family.

It catalyses the reaction (6S)-5,6,7,8-tetrahydrofolate + formate + ATP = (6R)-10-formyltetrahydrofolate + ADP + phosphate. It functions in the pathway one-carbon metabolism; tetrahydrofolate interconversion. This chain is Formate--tetrahydrofolate ligase, found in Streptococcus equi subsp. zooepidemicus (strain MGCS10565).